A 279-amino-acid chain; its full sequence is NADPH-dependent 7-cyano-7-deazaguanine reductase (279 aa).

86–88 (IES) contacts substrate. 88-89 (SK) provides a ligand contact to NADPH. Cys187 acts as the Thioimide intermediate in catalysis. Asp194 (proton donor) is an active-site residue. 226–227 (HE) lines the substrate pocket. Residue 255–256 (RG) participates in NADPH binding.

The protein belongs to the GTP cyclohydrolase I family. QueF type 2 subfamily. As to quaternary structure, homodimer.

The protein localises to the cytoplasm. The catalysed reaction is 7-aminomethyl-7-carbaguanine + 2 NADP(+) = 7-cyano-7-deazaguanine + 2 NADPH + 3 H(+). It participates in tRNA modification; tRNA-queuosine biosynthesis. Its function is as follows. Catalyzes the NADPH-dependent reduction of 7-cyano-7-deazaguanine (preQ0) to 7-aminomethyl-7-deazaguanine (preQ1). The protein is NADPH-dependent 7-cyano-7-deazaguanine reductase of Actinobacillus pleuropneumoniae serotype 3 (strain JL03).